A 440-amino-acid polypeptide reads, in one-letter code: GTPase Der (440 aa).

EngA-type G domains follow at residues 3 to 167 (PIIA…PYDR) and 176 to 351 (TRIA…EQYC). GTP-binding positions include 9 to 16 (GRPNVGKS), 56 to 60 (DTGGF), 119 to 122 (NKVD), 182 to 189 (GRPNVGKS), 229 to 233 (DTAGI), and 294 to 297 (NKWD). Positions 352–436 (KRVTTGELNR…PLKLIFRGRD (85 aa)) constitute a KH-like domain.

Belongs to the TRAFAC class TrmE-Era-EngA-EngB-Septin-like GTPase superfamily. EngA (Der) GTPase family. As to quaternary structure, associates with the 50S ribosomal subunit.

Its function is as follows. GTPase that plays an essential role in the late steps of ribosome biogenesis. This Geobacter sp. (strain M21) protein is GTPase Der.